The chain runs to 288 residues: 2-methoxy-6-polyprenyl-1,4-benzoquinol methylase, mitochondrial (288 aa).

S-adenosyl-L-methionine is bound by residues T68, D102, and S146. A compositionally biased stretch (low complexity) spans 260-270 (PITPTTSSDIP). The disordered stretch occupies residues 260-288 (PITPTTSSDIPAQNTSEATCEVKPEPNSA). Residues 279–288 (CEVKPEPNSA) are compositionally biased toward basic and acidic residues.

This sequence belongs to the class I-like SAM-binding methyltransferase superfamily. MenG/UbiE family. As to quaternary structure, component of a multi-subunit COQ enzyme complex.

It is found in the mitochondrion inner membrane. The enzyme catalyses a 2-methoxy-6-(all-trans-polyprenyl)benzene-1,4-diol + S-adenosyl-L-methionine = a 5-methoxy-2-methyl-3-(all-trans-polyprenyl)benzene-1,4-diol + S-adenosyl-L-homocysteine + H(+). It functions in the pathway cofactor biosynthesis; ubiquinone biosynthesis. In terms of biological role, methyltransferase required for the conversion of 2-polyprenyl-6-methoxy-1,4-benzoquinol (DDMQH2) to 2-polyprenyl-3-methyl-6-methoxy-1,4-benzoquinol (DMQH2). The chain is 2-methoxy-6-polyprenyl-1,4-benzoquinol methylase, mitochondrial from Leishmania donovani.